A 79-amino-acid polypeptide reads, in one-letter code: Exodeoxyribonuclease 7 small subunit (79 aa).

Belongs to the XseB family. In terms of assembly, heterooligomer composed of large and small subunits.

It is found in the cytoplasm. It carries out the reaction Exonucleolytic cleavage in either 5'- to 3'- or 3'- to 5'-direction to yield nucleoside 5'-phosphates.. Its function is as follows. Bidirectionally degrades single-stranded DNA into large acid-insoluble oligonucleotides, which are then degraded further into small acid-soluble oligonucleotides. This Lactococcus lactis subsp. lactis (strain IL1403) (Streptococcus lactis) protein is Exodeoxyribonuclease 7 small subunit.